The sequence spans 117 residues: Iron-sulfur cluster insertion protein ErpA (117 aa).

Iron-sulfur cluster-binding residues include Cys-45, Cys-109, and Cys-111.

The protein belongs to the HesB/IscA family. Homodimer. Iron-sulfur cluster serves as cofactor.

Required for insertion of 4Fe-4S clusters for at least IspG. This chain is Iron-sulfur cluster insertion protein ErpA, found in Ruthia magnifica subsp. Calyptogena magnifica.